Here is a 465-residue protein sequence, read N- to C-terminus: ATP synthase subunit beta (465 aa).

Position 148-155 (148-155 (GGAGVGKT)) interacts with ATP.

This sequence belongs to the ATPase alpha/beta chains family. In terms of assembly, F-type ATPases have 2 components, CF(1) - the catalytic core - and CF(0) - the membrane proton channel. CF(1) has five subunits: alpha(3), beta(3), gamma(1), delta(1), epsilon(1). CF(0) has three main subunits: a(1), b(2) and c(9-12). The alpha and beta chains form an alternating ring which encloses part of the gamma chain. CF(1) is attached to CF(0) by a central stalk formed by the gamma and epsilon chains, while a peripheral stalk is formed by the delta and b chains.

Its subcellular location is the cell inner membrane. It carries out the reaction ATP + H2O + 4 H(+)(in) = ADP + phosphate + 5 H(+)(out). In terms of biological role, produces ATP from ADP in the presence of a proton gradient across the membrane. The catalytic sites are hosted primarily by the beta subunits. This chain is ATP synthase subunit beta, found in Neisseria gonorrhoeae (strain ATCC 700825 / FA 1090).